The primary structure comprises 486 residues: Amyloid-beta A4 precursor protein-binding family B member 3 (486 aa).

Residues 29–61 (TGLPPGWRKIRDAAGTYYWHVPSGSTQWQRPTW) form the WW domain. PID domains follow at residues 113-280 (EPGA…QVEL) and 285-440 (SQAA…RTSS). Residues 438 to 460 (TSSMDSPGGPLPPPLLKGGAGGA) form a disordered region.

As to quaternary structure, interacts with APP (via intracellular domain). Interacts with APLP1 and APLP2 (via intracellular domain).

The protein resides in the cytoplasm. The protein localises to the nucleus. Its function is as follows. May modulate the internalization of amyloid-beta precursor protein. This Mus musculus (Mouse) protein is Amyloid-beta A4 precursor protein-binding family B member 3.